The sequence spans 495 residues: Alpha-1B-glycoprotein (495 aa).

The first 21 residues, M1–A21, serve as a signal peptide directing secretion. Ig-like V-type domains are found at residues A22–P113, K114–A206, P207–L299, I300–D397, and G398–S495. N-linked (GlcNAc...) (complex) asparagine glycosylation occurs at N44. 5 disulfide bridges follow: C49/C93, C139/C182, C232/C279, C325/C374, and C423/C470. N-linked (GlcNAc...) asparagine glycosylation occurs at N179. N-linked (GlcNAc...) asparagine glycosylation is found at N363 and N371.

Interacts with CRISP3. Plasma.

Its subcellular location is the secreted. The chain is Alpha-1B-glycoprotein (A1BG) from Homo sapiens (Human).